Consider the following 551-residue polypeptide: MMDLEHKRISRSTLPDYADPDYFEARGERNPVKPQSSNVVPGTSHIGSIKSPADYVFGDIIGDGSFSKVRRATDKKSWKEYAIKVLDKKYIVKENKVKYVNIERDSMMRLNGFPGISRLFHTFQDDLKLYYVLELAPNGELLQYIKKYRFLDENCVRFYAAEILSSIEYMHSCGIIHRDLKPENILFDGNMHVKITDFGTAKILPPKYVNSPDYTTFPSSFVGTAEYVAPELLSRQVVSKSSDLWAFACVVYQMIVGSPPFHGSNPNNIFKKIMSLEYELPKLLPPDIVPLFSHLFRIQPSDRSTTQQIKQFPFFATITWDNLWTQDPPPMQSFRPNYNIAIPNAPAYYRSNVTAAAAANAAAAFASASIVKHQETARRQELPTVNRFTAPTAHYGYASLRSHQMPVDRLYYKLVPSSESIIESTSVFVSPIPSVPEGNKFPSGLSKMFLKRKQRVMLLTDVGRCAFVCKGKHERLFIEMEVNLKDSSVVVIFDENSSKRFLIEDKVQSWIIEDSSGDVTKYKDKILKFADVASSHQSRSSEENVEENEEE.

Residues 24–43 are disordered; the sequence is EARGERNPVKPQSSNVVPGT. A Protein kinase domain is found at 55–315; sequence YVFGDIIGDG…TQQIKQFPFF (261 aa). Residues 65–67 and Lys-84 contribute to the ATP site; that span reads SFS. A PIF-pocket region spans residues 86–131; sequence LDKKYIVKENKVKYVNIERDSMMRLNGFPGISRLFHTFQDDLKLYY. ATP-binding positions include 134–136 and Glu-140; that span reads ELA. Asp-179 (proton acceptor) is an active-site residue. The ATP site is built by Glu-183 and Asp-197. At Ser-220 the chain carries Phosphoserine; by autocatalysis. Residue Ser-538 is modified to Phosphoserine.

This sequence belongs to the protein kinase superfamily. AGC Ser/Thr protein kinase family. PDPK1 subfamily.

Its subcellular location is the cytoplasm. It is found in the nucleus. The protein resides in the cytoskeleton. It localises to the microtubule organizing center. The protein localises to the spindle pole body. The catalysed reaction is L-seryl-[protein] + ATP = O-phospho-L-seryl-[protein] + ADP + H(+). It catalyses the reaction L-threonyl-[protein] + ATP = O-phospho-L-threonyl-[protein] + ADP + H(+). This Schizosaccharomyces pombe (strain 972 / ATCC 24843) (Fission yeast) protein is Serine/threonine-protein kinase ppk21 (ppk21).